A 319-amino-acid chain; its full sequence is Acetyl-coenzyme A carboxylase carboxyl transferase subunit alpha (319 aa).

Positions 38–292 constitute a CoA carboxyltransferase C-terminal domain; it reads ALDKKAETLL…GKAIEMMLKE (255 aa).

It belongs to the AccA family. As to quaternary structure, acetyl-CoA carboxylase is a heterohexamer composed of biotin carboxyl carrier protein (AccB), biotin carboxylase (AccC) and two subunits each of ACCase subunit alpha (AccA) and ACCase subunit beta (AccD).

The protein localises to the cytoplasm. The enzyme catalyses N(6)-carboxybiotinyl-L-lysyl-[protein] + acetyl-CoA = N(6)-biotinyl-L-lysyl-[protein] + malonyl-CoA. Its pathway is lipid metabolism; malonyl-CoA biosynthesis; malonyl-CoA from acetyl-CoA: step 1/1. Its function is as follows. Component of the acetyl coenzyme A carboxylase (ACC) complex. First, biotin carboxylase catalyzes the carboxylation of biotin on its carrier protein (BCCP) and then the CO(2) group is transferred by the carboxyltransferase to acetyl-CoA to form malonyl-CoA. The chain is Acetyl-coenzyme A carboxylase carboxyl transferase subunit alpha from Cereibacter sphaeroides (strain ATCC 17029 / ATH 2.4.9) (Rhodobacter sphaeroides).